A 397-amino-acid polypeptide reads, in one-letter code: MTIRNQRFSLLKQPIYSTLNQHLIDYPLPSILSYWWGFGSLAGICLVIQIVTGVFLAMNYTPHVDLAFNSVEHIMRDVEGGWLLRYMHANGASMFFIVVYLHIFRGLYYASYSSPREFVWCLGVVIFLLMIVTAFIGYVLPWGQMSFWGATVITSLASAIPVVGDTIVTWLWGGFSVDNATLNRFFSLHYLLPFILVGASLLHLAALHQYGSNNPLGVHSEMDKIAFYPYFYVKDLVGWVAFAIFFSIWIFFAPNVLGHPDNYIPANPMSTPPHIVPEWYFLPIYAILRSIPDKAGGVAAIALVFISLLALPFFKEMYVRSSSFRPIYQGIFWLLLADCLLLGWIGCQPVEAPFVTIGQISSFFFFLFFAITPILGRVGRGIPKYYTDETHRTGSFS.

A run of 4 helical transmembrane segments spans residues 38-58 (FGSL…FLAM), 82-104 (WLLR…LHIF), 119-139 (VWCL…IGYV), and 185-205 (FFSL…LHLA). The heme b site is built by histidine 88 and histidine 102. Positions 189 and 203 each coordinate heme b. A ubiquinone is bound at residue histidine 208. 4 consecutive transmembrane segments (helical) span residues 231 to 251 (FYVK…IWIF), 295 to 315 (AGGV…PFFK), 327 to 347 (IYQG…WIGC), and 354 to 373 (FVTI…AITP).

This sequence belongs to the cytochrome b family. In terms of assembly, the main subunits of complex b-c1 are: cytochrome b, cytochrome c1 and the Rieske protein. It depends on heme b as a cofactor.

The protein resides in the mitochondrion inner membrane. Its function is as follows. Component of the ubiquinol-cytochrome c reductase complex (complex III or cytochrome b-c1 complex) that is part of the mitochondrial respiratory chain. The b-c1 complex mediates electron transfer from ubiquinol to cytochrome c. Contributes to the generation of a proton gradient across the mitochondrial membrane that is then used for ATP synthesis. This is Cytochrome b (MT-CYB) from Oryza sativa subsp. indica (Rice).